A 321-amino-acid chain; its full sequence is Olfactory receptor 56B34 (321 aa).

The Extracellular portion of the chain corresponds to 1–36 (MGTALHETNSSEVHVSEFILLGFPGIHEFQIWLSLP). A helical membrane pass occupies residues 37 to 57 (MALLYIVALGANLLILITIYL). Over 58–70 (EPTLHQPMYQFLG) the chain is Cytoplasmic. Residues 71–91 (ILAAVDIGLATTSMPKILAIL) traverse the membrane as a helical segment. Residues 92–105 (WFDAKTISLPECFA) lie on the Extracellular side of the membrane. A disulfide bridge connects residues cysteine 103 and cysteine 185. The chain crosses the membrane as a helical span at residues 106–126 (QIYAIHTFMCMESGVFLCMAI). At 127-128 (DR) the chain is on the cytoplasmic side. Residues 129–149 (YVAICYPLQYPSIVTEAFVIK) form a helical membrane-spanning segment. At 150–207 (ATLSMLLRNGLLTIPVPVLAAQRQYCSRNEIDHCLCSNLGVISLACDDITVNRFYQLA) the chain is on the extracellular side. A helical transmembrane segment spans residues 208–228 (LAWLVVGSDMILVYASYALII). At 229-250 (RSVLRLNSTEAASKALSTCSSH) the chain is on the cytoplasmic side. A helical membrane pass occupies residues 251 to 271 (LILIMFYYTAIVIVSVTHLAG). Over 272–275 (RRVP) the chain is Extracellular. The chain crosses the membrane as a helical span at residues 276 to 296 (LIPVLLNVMHIVIPPSLNPVV). The Cytoplasmic segment spans residues 297–321 (YALRTQELKVGFRKVFSLSEFVSRK).

It belongs to the G-protein coupled receptor 1 family.

The protein resides in the cell membrane. Odorant receptor. The polypeptide is Olfactory receptor 56B34 (Mus musculus (Mouse)).